Consider the following 389-residue polypeptide: MNDRFRRELQVIEEQGLTRKLRLFSTGNESEVVMNGKKFLLFSSNNYLGLATDSRLKKKATEGISKYGTGAGGSRLTTGNFDIHEQLESEIADFKKTEAAIVFSSGYLANVGVISSVMKAGDTIFSDAWNHASIIDGCRLSKAKTIVYEHADMVDLERKLRQSHGDGLKFIVTDGVFSMDGDIAPLPKIVELAKEYKAYIMIDDAHATGVLGNDGCGTADYFGLKDEIDFTVGTLSKAIGAEGGFVSTSSIAKNYLLNNARSFIFQTALSPSAIEAAREGISIIQNEPERRKQLLKNAQYLRLKLEESGFVMKEGETPIISLIIGGSHEAMQFSAKLLDEGVFIPAIRPPTVPKGSSRLRITVMATHTIEQLDMVISKIKKIGKEMGIV.

Arg19 is a binding site for substrate. Pyridoxal 5'-phosphate is bound at residue 106–107 (GY). His131 lines the substrate pocket. Residues Ser178, 203-206 (DDAH), and 234-237 (TLSK) each bind pyridoxal 5'-phosphate. Lys237 bears the N6-(pyridoxal phosphate)lysine mark. Thr351 provides a ligand contact to substrate.

Belongs to the class-II pyridoxal-phosphate-dependent aminotransferase family. BioF subfamily. In terms of assembly, homodimer. It depends on pyridoxal 5'-phosphate as a cofactor.

The enzyme catalyses 6-carboxyhexanoyl-[ACP] + L-alanine + H(+) = (8S)-8-amino-7-oxononanoate + holo-[ACP] + CO2. It participates in cofactor biosynthesis; biotin biosynthesis. In terms of biological role, catalyzes the decarboxylative condensation of pimeloyl-[acyl-carrier protein] and L-alanine to produce 8-amino-7-oxononanoate (AON), [acyl-carrier protein], and carbon dioxide. Can also use pimeloyl-CoA instead of pimeloyl-ACP as substrate. The protein is 8-amino-7-oxononanoate synthase (bioF) of Lysinibacillus sphaericus (Bacillus sphaericus).